We begin with the raw amino-acid sequence, 131 residues long: Small ribosomal subunit protein uS8 (131 aa).

The protein belongs to the universal ribosomal protein uS8 family. In terms of assembly, part of the 30S ribosomal subunit. Contacts proteins S5 and S12.

One of the primary rRNA binding proteins, it binds directly to 16S rRNA central domain where it helps coordinate assembly of the platform of the 30S subunit. The polypeptide is Small ribosomal subunit protein uS8 (Novosphingobium aromaticivorans (strain ATCC 700278 / DSM 12444 / CCUG 56034 / CIP 105152 / NBRC 16084 / F199)).